Consider the following 282-residue polypeptide: MAGFSHLPQQMEHGLITNNGFLFCHGSHGGAATTTAPAIPEDASMETSSVVLDTSPQDKKRKPREEDTASLNSAHSKEAKENGRKRGGKKHSRDQMEEEAPQGFIHVRARRGQATDSHSLAERVRRERISERMRMLQALVPGCDKVTGKALILDEIINYVQSLQNQVEFLSMRIASLSPVLYGFGIDSDAFSDHSQKMEGMFHEAVAIPASVLNRGSSPAQSHAIMDTSNTSPTPYTLQVQGGSNNNSLSQDNGSYIMQTVGEPRQELFNQVVLNNYMCSFQ.

A disordered region spans residues 34–123 (TTAPAIPEDA…ATDSHSLAER (90 aa)). Positions 45 to 55 (METSSVVLDTS) are enriched in polar residues. Positions 75–84 (HSKEAKENGR) are enriched in basic and acidic residues. A Nuclear localization signal motif is present at residues 109 to 116 (ARRGQATD). Residues 113–126 (QATDSHSLAERVRR) form a basic motif; degenerate region. Residues 113–163 (QATDSHSLAERVRRERISERMRMLQALVPGCDKVTGKALILDEIINYVQSL) enclose the bHLH domain. The interval 127–163 (ERISERMRMLQALVPGCDKVTGKALILDEIINYVQSL) is helix-loop-helix motif. Positions 219–251 (PAQSHAIMDTSNTSPTPYTLQVQGGSNNNSLSQ) are disordered.

This sequence belongs to the bHLH protein family. In terms of assembly, homodimer. Component of a nuclear cell elongation controlling complex made of ILI5/BUL1, LO9-177 and BC1. Interacts with ILI5/BUL1 only in the presence of LO9-177. Interacts with IBH1. Binds to LO9-177 in the nucleus. Interacts with BCL1. As to expression, preferentially present in anthers and leaves lamina joints. Expressed in seedlings, leaves sheaths, collars and panicles.

It localises to the nucleus. Functionally, transcription activator that contributes, together with LO9-177 and ILI5/BUL1, to the promotion of leaf inclination and grain size by modulating cell elongation. Involved in the RLI1-dependent modulation of leaf inclination by promoting lamina joint cell elongation, especially in response to phosphate (Pi) availability. The chain is Transcription factor BC1 from Oryza sativa subsp. japonica (Rice).